We begin with the raw amino-acid sequence, 338 residues long: Fructose-1,6-bisphosphatase class 1 (338 aa).

Positions 91, 113, 115, and 116 each coordinate Mg(2+). Substrate is bound by residues 116–119 (DGSS), Asn-208, and Lys-274. Glu-280 serves as a coordination point for Mg(2+).

It belongs to the FBPase class 1 family. As to quaternary structure, homotetramer. Mg(2+) serves as cofactor.

The protein localises to the cytoplasm. The catalysed reaction is beta-D-fructose 1,6-bisphosphate + H2O = beta-D-fructose 6-phosphate + phosphate. The protein operates within carbohydrate biosynthesis; gluconeogenesis. The sequence is that of Fructose-1,6-bisphosphatase class 1 from Ralstonia pickettii (strain 12J).